Consider the following 3330-residue polypeptide: Laminin subunit alpha-3 (3330 aa).

The signal sequence occupies residues 1 to 31 (MAVALGRAPRSLPLLLTLLLLLLLRMSPSWS). The region spanning 40–295 (SSRSLHPPYF…SIKDISVGGR (256 aa)) is the Laminin N-terminal domain. Asn139 carries N-linked (GlcNAc...) asparagine glycosylation. The segment at 295-725 (RCVCNGHAEA…NNYYFPDLHH (431 aa)) is domain V. Cystine bridges form between Cys296/Cys305, Cys298/Cys316, Cys318/Cys327, Cys330/Cys350, Cys353/Cys362, Cys355/Cys387, Cys390/Cys399, Cys402/Cys420, Cys423/Cys433, Cys425/Cys440, Cys442/Cys451, Cys454/Cys464, Cys488/Cys500, Cys490/Cys506, Cys508/Cys517, Cys520/Cys530, Cys533/Cys545, Cys535/Cys552, Cys554/Cys563, Cys566/Cys583, Cys628/Cys642, Cys630/Cys649, Cys651/Cys660, Cys663/Cys678, Cys681/Cys693, Cys683/Cys700, and Cys702/Cys711. 8 consecutive Laminin EGF-like domains span residues 296 to 350 (CVCN…HNEC), 353 to 420 (CNCH…LHGC), 423 to 464 (CSCD…FPFC), 488 to 530 (CDCN…FPIC), 533 to 576 (CQCS…FPYC), 582 to 625 (VCHP…PRGC), 628 to 678 (CQCH…YFGC), and 681 to 725 (CQCD…DLHH). The N-linked (GlcNAc...) asparagine glycan is linked to Asn445. Positions 793-1262 (TEAISGRITL…VAFYHNGAIP (470 aa)) are domain IV 1 (domain IV B). A domain III B region spans residues 1263–1462 (CECDPAGTAG…CFCFGVNTDC (200 aa)). 12 disulfide bridges follow: Cys1309–Cys1316, Cys1311–Cys1323, Cys1325–Cys1334, Cys1337–Cys1350, Cys1353–Cys1368, Cys1355–Cys1375, Cys1377–Cys1386, Cys1389–Cys1399, Cys1402–Cys1414, Cys1404–Cys1421, Cys1423–Cys1432, and Cys1435–Cys1450. Laminin EGF-like domains follow at residues 1309 to 1352 (CNCG…GCDV), 1353 to 1401 (CNCS…ECVP), and 1402 to 1452 (CSCN…GCTK). N-linked (GlcNAc...) asparagine glycosylation occurs at Asn1354. Residues 1453–1462 (CFCFGVNTDC) form the Laminin EGF-like 12; first part domain. The region spanning 1466-1650 (HKQRAKFVDM…SGPRAHLVEM (185 aa)) is the Laminin IV type A domain. A Laminin EGF-like 12; second part domain is found at 1651-1683 (CACPPDYTGDSCQGCRPGYYWDNKSLPVGRCVP). A domain III A region spans residues 1651–1818 (CACPPDYTGD…DGSPAEECDD (168 aa)). Asn1673 is a glycosylation site (N-linked (GlcNAc...) asparagine). Cystine bridges form between Cys1684/Cys1693, Cys1686/Cys1700, Cys1703/Cys1712, Cys1715/Cys1728, Cys1731/Cys1743, Cys1733/Cys1752, Cys1754/Cys1763, and Cys1766/Cys1781. 2 consecutive Laminin EGF-like domains span residues 1684–1730 (CNCN…SCRV) and 1731–1783 (CPCP…SCQP). In terms of domain architecture, Laminin EGF-like 15; truncated spans 1784-1818 (CNCNSNGQLGPCDPLTGDCVNQEPKDGSPAEECDD). The tract at residues 1819–2385 (CDSCVMTLLN…ARDAANKVAI (567 aa)) is domain II and I. Coiled coils occupy residues 1851 to 1980 (TGAL…LRSR), 2012 to 2057 (VENN…HENE), 2088 to 2165 (LLQT…GDEL), and 2211 to 2238 (KRAK…QQVS). A glycan (N-linked (GlcNAc...) asparagine) is linked at Asn2159. Asn2261 is a glycosylation site (N-linked (GlcNAc...) asparagine). Positions 2274-2276 (RGD) match the Cell attachment site motif. The stretch at 2318–2383 (SARREDFSKA…QQARDAANKV (66 aa)) forms a coiled coil. N-linked (GlcNAc...) asparagine glycans are attached at residues Asn2332, Asn2361, Asn2498, Asn2580, and Asn2747. Laminin G-like domains follow at residues 2386-2587 (PMRF…VEPC), 2594-2756 (SDKN…TKKC), 2763-2923 (VRTA…LGGC), 2983-3147 (ALQF…VSPC), and 3154-3327 (KGIY…LNGC). Intrachain disulfides connect Cys2557/Cys2587, Cys2733/Cys2756, and Cys2891/Cys2923. A glycan (N-linked (GlcNAc...) asparagine) is linked at Asn3094. Cys3124 and Cys3147 are oxidised to a cystine. Residue Asn3270 is glycosylated (N-linked (GlcNAc...) asparagine). Cysteines 3299 and 3327 form a disulfide.

As to quaternary structure, laminin is a complex glycoprotein, consisting of three different polypeptide chains (alpha, beta, gamma), which are bound to each other by disulfide bonds into a cross-shaped molecule comprising one long and three short arms with globules at each end. Alpha-3 is a subunit of laminin-5 (laminin-332 or epiligrin/kalinin/nicein), laminin-6 (laminin-311 or K-laminin) and laminin-7 (laminin-321 or KS-laminin). Basal membrane of the upper alimentary tract and urinary and nasal epithelia, salivary glands and teeth (both variants). Isoform A is predominantly expressed in skin, hair follicles and developing neurons of the trigeminal ganglion. Isoform B was found in bronchi, alveoli, stomach, intestinal crypts, whisker pads, CNS, telencephalic neuroectoderm, thalamus, Rathke pouch and periventricular subependymal germinal layer.

It localises to the secreted. The protein resides in the extracellular space. The protein localises to the extracellular matrix. It is found in the basement membrane. Functionally, binding to cells via a high affinity receptor, laminin is thought to mediate the attachment, migration and organization of cells into tissues during embryonic development by interacting with other extracellular matrix components. Laminin-5 is thought to be involved in (1) cell adhesion via integrin alpha-3/beta-1 in focal adhesion and integrin alpha-6/beta-4 in hemidesmosomes, (2) signal transduction via tyrosine phosphorylation of pp125-FAK and p80, (3) differentiation of keratinocytes. The polypeptide is Laminin subunit alpha-3 (Lama3) (Mus musculus (Mouse)).